The sequence spans 431 residues: Enolase (431 aa).

Gln-166 contributes to the (2R)-2-phosphoglycerate binding site. Catalysis depends on Glu-208, which acts as the Proton donor. Asp-245, Glu-288, and Asp-315 together coordinate Mg(2+). (2R)-2-phosphoglycerate contacts are provided by Lys-340, Arg-369, Ser-370, and Lys-391. The active-site Proton acceptor is Lys-340.

The protein belongs to the enolase family. It depends on Mg(2+) as a cofactor.

The protein localises to the cytoplasm. The protein resides in the secreted. Its subcellular location is the cell surface. It carries out the reaction (2R)-2-phosphoglycerate = phosphoenolpyruvate + H2O. It participates in carbohydrate degradation; glycolysis; pyruvate from D-glyceraldehyde 3-phosphate: step 4/5. Its function is as follows. Catalyzes the reversible conversion of 2-phosphoglycerate (2-PG) into phosphoenolpyruvate (PEP). It is essential for the degradation of carbohydrates via glycolysis. This is Enolase from Clostridium botulinum (strain Loch Maree / Type A3).